The chain runs to 183 residues: CASP-like protein UU2 (183 aa).

The Cytoplasmic portion of the chain corresponds to 1–33 (MEESQQQSSKFDAPPSPYVPSRVYLAQIYWKKP). Residues 34–54 (AIVVLRVLQFIFSLIAFSVMA) form a helical membrane-spanning segment. The Extracellular portion of the chain corresponds to 55–72 (DVLHDVQGSIKSLSYTVA). Residues 73–93 (IGVLACAYALAQLSFSLWCVI) form a helical membrane-spanning segment. Residues 94 to 118 (RGATSSAGVTPLYQYATFICDQMST) lie on the Cytoplasmic side of the membrane. Residues 119–139 (YFLISAASATATLIDVSGVCG) form a helical membrane-spanning segment. The Extracellular segment spans residues 140–156 (SNGSGTNLCSRSTASVT). Asn141 carries N-linked (GlcNAc...) asparagine glycosylation. A helical membrane pass occupies residues 157 to 177 (FAFLAFLAFSASSVLTGYYLV). Residues 178 to 183 (KCILKA) are Cytoplasmic-facing.

The protein belongs to the Casparian strip membrane proteins (CASP) family. Homodimer and heterodimers.

It localises to the cell membrane. The polypeptide is CASP-like protein UU2 (Selaginella moellendorffii (Spikemoss)).